An 873-amino-acid polypeptide reads, in one-letter code: Probable beta-glucosidase A (873 aa).

Residues 1–19 (MRFGWLEVAALTAASVANA) form the signal peptide. N-linked (GlcNAc...) asparagine glycans are attached at residues Asn-71, Asn-222, and Asn-263. Residue Asp-291 is part of the active site. 9 N-linked (GlcNAc...) asparagine glycosylation sites follow: Asn-326, Asn-333, Asn-365, Asn-453, Asn-534, Asn-553, Asn-575, Asn-679, and Asn-725. The interval 731–764 (DSSDDPNYGWEDSEYIPEGARDGSPQPLLKAGGA) is disordered.

It belongs to the glycosyl hydrolase 3 family.

It localises to the secreted. The enzyme catalyses Hydrolysis of terminal, non-reducing beta-D-glucosyl residues with release of beta-D-glucose.. It functions in the pathway glycan metabolism; cellulose degradation. Functionally, beta-glucosidases are one of a number of cellulolytic enzymes involved in the degradation of cellulosic biomass. Catalyzes the last step releasing glucose from the inhibitory cellobiose. In Aspergillus fumigatus (strain CBS 144.89 / FGSC A1163 / CEA10) (Neosartorya fumigata), this protein is Probable beta-glucosidase A (bglA).